The chain runs to 310 residues: Aspartate carbamoyltransferase catalytic subunit (310 aa).

Residues Arg-58 and Thr-59 each contribute to the carbamoyl phosphate site. Lys-86 contributes to the L-aspartate binding site. 3 residues coordinate carbamoyl phosphate: Arg-108, His-137, and Gln-140. Residues Arg-170 and Arg-225 each coordinate L-aspartate. The carbamoyl phosphate site is built by Gly-264 and Pro-265.

The protein belongs to the aspartate/ornithine carbamoyltransferase superfamily. ATCase family. Heterododecamer (2C3:3R2) of six catalytic PyrB chains organized as two trimers (C3), and six regulatory PyrI chains organized as three dimers (R2).

It carries out the reaction carbamoyl phosphate + L-aspartate = N-carbamoyl-L-aspartate + phosphate + H(+). Its pathway is pyrimidine metabolism; UMP biosynthesis via de novo pathway; (S)-dihydroorotate from bicarbonate: step 2/3. Functionally, catalyzes the condensation of carbamoyl phosphate and aspartate to form carbamoyl aspartate and inorganic phosphate, the committed step in the de novo pyrimidine nucleotide biosynthesis pathway. The chain is Aspartate carbamoyltransferase catalytic subunit from Coxiella burnetii (strain CbuK_Q154) (Coxiella burnetii (strain Q154)).